A 422-amino-acid polypeptide reads, in one-letter code: Phospho-N-acetylmuramoyl-pentapeptide-transferase (422 aa).

9 consecutive transmembrane segments (helical) span residues 28-48 (LMAV…FINL), 71-91 (VGVP…PCLL), 95-115 (LDNI…SLGF), 136-156 (IIGQ…SPDV), 211-231 (AGWF…SNGA), 239-259 (GMAA…AYVS), 279-299 (LVIY…YNAY), 313-333 (IGGI…IPIL), and 399-419 (KITV…IITL).

It belongs to the glycosyltransferase 4 family. MraY subfamily. Requires Mg(2+) as cofactor.

It localises to the cell inner membrane. It catalyses the reaction UDP-N-acetyl-alpha-D-muramoyl-L-alanyl-gamma-D-glutamyl-meso-2,6-diaminopimeloyl-D-alanyl-D-alanine + di-trans,octa-cis-undecaprenyl phosphate = di-trans,octa-cis-undecaprenyl diphospho-N-acetyl-alpha-D-muramoyl-L-alanyl-D-glutamyl-meso-2,6-diaminopimeloyl-D-alanyl-D-alanine + UMP. Its pathway is cell wall biogenesis; peptidoglycan biosynthesis. In terms of biological role, catalyzes the initial step of the lipid cycle reactions in the biosynthesis of the cell wall peptidoglycan: transfers peptidoglycan precursor phospho-MurNAc-pentapeptide from UDP-MurNAc-pentapeptide onto the lipid carrier undecaprenyl phosphate, yielding undecaprenyl-pyrophosphoryl-MurNAc-pentapeptide, known as lipid I. In Bacteroides thetaiotaomicron (strain ATCC 29148 / DSM 2079 / JCM 5827 / CCUG 10774 / NCTC 10582 / VPI-5482 / E50), this protein is Phospho-N-acetylmuramoyl-pentapeptide-transferase.